We begin with the raw amino-acid sequence, 347 residues long: tRNA N6-adenosine threonylcarbamoyltransferase (347 aa).

Fe cation contacts are provided by histidine 117 and histidine 121. Substrate is bound by residues leucine 140–glycine 144, aspartate 174, glycine 187, aspartate 191, and asparagine 281. Aspartate 309 lines the Fe cation pocket.

The protein belongs to the KAE1 / TsaD family. The cofactor is Fe(2+).

The protein resides in the cytoplasm. The enzyme catalyses L-threonylcarbamoyladenylate + adenosine(37) in tRNA = N(6)-L-threonylcarbamoyladenosine(37) in tRNA + AMP + H(+). Required for the formation of a threonylcarbamoyl group on adenosine at position 37 (t(6)A37) in tRNAs that read codons beginning with adenine. Is involved in the transfer of the threonylcarbamoyl moiety of threonylcarbamoyl-AMP (TC-AMP) to the N6 group of A37, together with TsaE and TsaB. TsaD likely plays a direct catalytic role in this reaction. The chain is tRNA N6-adenosine threonylcarbamoyltransferase from Thermobifida fusca (strain YX).